The following is a 906-amino-acid chain: Peroxisomal hydratase-dehydrogenase-epimerase (906 aa).

2 short-chain dehydrogenase like regions span residues 5–228 (DFKD…SSAE) and 319–532 (SLKD…GTDD). 4 residues coordinate NADP(+): Ile-13, Lys-52, Asn-98, and Lys-131. Active-site proton donor residues include Ser-149 and Tyr-163. Residues Tyr-163 and Lys-167 each contribute to the NADP(+) site. Catalysis depends on Tyr-163, which acts as the Proton acceptor. Residue Lys-167 is the Lowers pKa of active site Tyr of the active site. The Proton acceptor role is filled by Tyr-467. Residues 600 to 633 (AVGGDDDDDDEDEEEDEGDEEEDEEDEEEDDPVW) are disordered. The segment covering 603-630 (GDDDDDDEDEEEDEGDEEEDEEDEEEDD) has biased composition (acidic residues). The (3R)-3-hydroxydecanoyl-CoA site is built by His-699, Gly-700, Lys-729, Tyr-757, Asp-808, Asn-810, Gly-831, Phe-856, Thr-857, and Gly-858. The MaoC-like domain maps to 782-893 (APKRAPDYQV…VVDRGTIAIN (112 aa)). The Microbody targeting signal signature appears at 904–906 (AKI).

Belongs to the short-chain dehydrogenases/reductases (SDR) family. As to quaternary structure, monomer.

It is found in the peroxisome. The enzyme catalyses a (3R)-3-hydroxyacyl-CoA = a (2E)-enoyl-CoA + H2O. It catalyses the reaction a (3R)-3-hydroxyacyl-CoA + NAD(+) = a 3-oxoacyl-CoA + NADH + H(+). It participates in lipid metabolism; fatty acid beta-oxidation. Second trifunctional enzyme acting on the beta-oxidation pathway for fatty acids, possessing hydratase-dehydrogenase-epimerase activities. Converts trans-2-enoyl-CoA via D-3-hydroxyacyl-CoA to 3-ketoacyl-CoA. This Candida tropicalis (Yeast) protein is Peroxisomal hydratase-dehydrogenase-epimerase.